We begin with the raw amino-acid sequence, 173 residues long: uncharacterized protein (173 aa).

Residues 1 to 11 are compositionally biased toward basic and acidic residues; sequence MLCAKNKKDPK. Residues 1 to 173 form a disordered region; the sequence is MLCAKNKKDP…EKMEKSEKAY (173 aa). Over residues 17–41 the composition is skewed to polar residues; that stretch reads FSETSKVQNVQNTQPKPAAPSQMSI. 2 stretches are compositionally biased toward basic and acidic residues: residues 56–109 and 120–144; these read KSVE…KADN and AKKEQEEENPKTDLESHKDEAEAKK. A compositionally biased stretch (basic residues) spans 145–156; the sequence is KESRRQKKMRNK. Over residues 157–173 the composition is skewed to basic and acidic residues; it reads NSKEGSVEKMEKSEKAY.

This is an uncharacterized protein from Caenorhabditis elegans.